Here is a 663-residue protein sequence, read N- to C-terminus: Oxytetracycline resistance protein (663 aa).

A tr-type G domain is found at 1–252 (MNKLNLGILA…GIRELLPSVH (252 aa)). GTP-binding positions include 10–17 (AHVDAGKT), 74–78 (DTPGH), and 128–131 (NKID).

The protein belongs to the TRAFAC class translation factor GTPase superfamily. Classic translation factor GTPase family. TetM/TetO subfamily.

Functionally, abolishes the inhibitory effect of oxytetracycline on protein synthesis by a non-covalent modification of the ribosomes. In Streptomyces rimosus, this protein is Oxytetracycline resistance protein (otrA).